The chain runs to 448 residues: Bifunctional protein GlmU (448 aa).

The pyrophosphorylase stretch occupies residues 1–229; the sequence is MNNHTLNIII…NDEIQGINNL (229 aa). Residues 11 to 14, lysine 25, glutamine 76, 81 to 82, 103 to 105, glycine 140, glutamate 154, asparagine 169, and asparagine 227 each bind UDP-N-acetyl-alpha-D-glucosamine; these read LAAG, GT, and YGD. Residue aspartate 105 coordinates Mg(2+). Asparagine 227 contacts Mg(2+). Residues 230–250 are linker; sequence LQLVRAEKIYQKQQAKLLLLS. Residues 251-448 form an N-acetyltransferase region; it reads GIMIYNPSNF…NEKKQIHKKL (198 aa). Lysine 351 is a UDP-N-acetyl-alpha-D-glucosamine binding site. The active-site Proton acceptor is the histidine 363. UDP-N-acetyl-alpha-D-glucosamine-binding residues include tyrosine 366 and asparagine 377. Residues alanine 380, 386 to 387, serine 405, and alanine 423 each bind acetyl-CoA; that span reads NY.

In the N-terminal section; belongs to the N-acetylglucosamine-1-phosphate uridyltransferase family. This sequence in the C-terminal section; belongs to the transferase hexapeptide repeat family. Homotrimer. The cofactor is Mg(2+).

It is found in the cytoplasm. It carries out the reaction alpha-D-glucosamine 1-phosphate + acetyl-CoA = N-acetyl-alpha-D-glucosamine 1-phosphate + CoA + H(+). It catalyses the reaction N-acetyl-alpha-D-glucosamine 1-phosphate + UTP + H(+) = UDP-N-acetyl-alpha-D-glucosamine + diphosphate. It participates in nucleotide-sugar biosynthesis; UDP-N-acetyl-alpha-D-glucosamine biosynthesis; N-acetyl-alpha-D-glucosamine 1-phosphate from alpha-D-glucosamine 6-phosphate (route II): step 2/2. The protein operates within nucleotide-sugar biosynthesis; UDP-N-acetyl-alpha-D-glucosamine biosynthesis; UDP-N-acetyl-alpha-D-glucosamine from N-acetyl-alpha-D-glucosamine 1-phosphate: step 1/1. It functions in the pathway bacterial outer membrane biogenesis; LPS lipid A biosynthesis. In terms of biological role, catalyzes the last two sequential reactions in the de novo biosynthetic pathway for UDP-N-acetylglucosamine (UDP-GlcNAc). The C-terminal domain catalyzes the transfer of acetyl group from acetyl coenzyme A to glucosamine-1-phosphate (GlcN-1-P) to produce N-acetylglucosamine-1-phosphate (GlcNAc-1-P), which is converted into UDP-GlcNAc by the transfer of uridine 5-monophosphate (from uridine 5-triphosphate), a reaction catalyzed by the N-terminal domain. This Buchnera aphidicola subsp. Baizongia pistaciae (strain Bp) protein is Bifunctional protein GlmU.